The primary structure comprises 863 residues: Cilia- and flagella-associated protein 58 (863 aa).

2 coiled-coil regions span residues 107-600 (TVKE…NERD) and 631-815 (QSQY…KQVF). The segment at 836-863 (GPSLLDQLPGGSGTGSGGMATGGGVGMS) is disordered. Residues 845–863 (GGSGTGSGGMATGGGVGMS) show a composition bias toward gly residues.

It belongs to the CFAP58 family.

Its subcellular location is the cell projection. It is found in the cilium. The protein localises to the flagellum. In Chlamydomonas reinhardtii (Chlamydomonas smithii), this protein is Cilia- and flagella-associated protein 58.